We begin with the raw amino-acid sequence, 100 residues long: MAKKSLIYREKKRQKLEQKYHLIRRSSKKEISLIPSLSEKWKIHGKLQSPPRNSAPTRLHRRCFSTGRPRANYRDFGLSGHILREMVQACLLPGATRSSW.

Belongs to the universal ribosomal protein uS14 family. In terms of assembly, part of the 30S ribosomal subunit.

Its subcellular location is the plastid. It is found in the chloroplast. In terms of biological role, binds 16S rRNA, required for the assembly of 30S particles. This is Small ribosomal subunit protein uS14c from Draba nemorosa (Woodland whitlowgrass).